The sequence spans 374 residues: 3-dehydroquinate synthase (374 aa).

The protein belongs to the archaeal-type DHQ synthase family.

The enzyme catalyses 2-amino-2,3,7-trideoxy-D-lyxo-hept-6-ulosonate + NAD(+) + H2O = 3-dehydroquinate + NH4(+) + NADH + H(+). Its function is as follows. Catalyzes the oxidative deamination and cyclization of 2-amino-3,7-dideoxy-D-threo-hept-6-ulosonic acid (ADH) to yield 3-dehydroquinate (DHQ), which is fed into the canonical shikimic pathway of aromatic amino acid biosynthesis. In Methanocella arvoryzae (strain DSM 22066 / NBRC 105507 / MRE50), this protein is 3-dehydroquinate synthase.